Here is a 299-residue protein sequence, read N- to C-terminus: N-acetylneuraminate lyase (299 aa).

Residues S45 and S46 each coordinate aceneuramate. Catalysis depends on Y134, which acts as the Proton donor. K161 serves as the catalytic Schiff-base intermediate with substrate. Residues T163, G185, D187, and E188 each contribute to the aceneuramate site.

It belongs to the DapA family. NanA subfamily. Homotetramer.

The protein resides in the cytoplasm. It carries out the reaction aceneuramate = aldehydo-N-acetyl-D-mannosamine + pyruvate. It participates in amino-sugar metabolism; N-acetylneuraminate degradation; D-fructose 6-phosphate from N-acetylneuraminate: step 1/5. Functionally, catalyzes the reversible aldol cleavage of N-acetylneuraminic acid (sialic acid; Neu5Ac) to form pyruvate and N-acetylmannosamine (ManNAc) via a Schiff base intermediate. In Rhizobium meliloti (strain 1021) (Ensifer meliloti), this protein is N-acetylneuraminate lyase.